Reading from the N-terminus, the 525-residue chain is GMP synthase [glutamine-hydrolyzing] (525 aa).

The Glutamine amidotransferase type-1 domain maps to 8–207; sequence KILILDFGSQ…VMDICGCDNK (200 aa). The active-site Nucleophile is the Cys-85. Residues His-181 and Glu-183 contribute to the active site. A GMPS ATP-PPase domain is found at 208–400; sequence WQPASIIEDA…LGLPYDMLYR (193 aa). 235–241 is a binding site for ATP; that stretch reads SGGVDSS.

As to quaternary structure, homodimer.

It carries out the reaction XMP + L-glutamine + ATP + H2O = GMP + L-glutamate + AMP + diphosphate + 2 H(+). It functions in the pathway purine metabolism; GMP biosynthesis; GMP from XMP (L-Gln route): step 1/1. Catalyzes the synthesis of GMP from XMP. In Shewanella amazonensis (strain ATCC BAA-1098 / SB2B), this protein is GMP synthase [glutamine-hydrolyzing].